Reading from the N-terminus, the 78-residue chain is Translational regulator CsrA (78 aa).

Belongs to the CsrA/RsmA family. In terms of assembly, homodimer; the beta-strands of each monomer intercalate to form a hydrophobic core, while the alpha-helices form wings that extend away from the core.

The protein localises to the cytoplasm. Its function is as follows. A translational regulator that binds mRNA to regulate translation initiation and/or mRNA stability. Usually binds in the 5'-UTR at or near the Shine-Dalgarno sequence preventing ribosome-binding, thus repressing translation. Its main target seems to be the major flagellin gene, while its function is anatagonized by FliW. In Natranaerobius thermophilus (strain ATCC BAA-1301 / DSM 18059 / JW/NM-WN-LF), this protein is Translational regulator CsrA.